The following is a 169-amino-acid chain: NADH-quinone oxidoreductase subunit B (169 aa).

Residues C42, C43, C107, and C136 each coordinate [4Fe-4S] cluster.

Belongs to the complex I 20 kDa subunit family. NDH-1 is composed of 14 different subunits. Subunits NuoB, C, D, E, F, and G constitute the peripheral sector of the complex. [4Fe-4S] cluster is required as a cofactor.

It localises to the cell inner membrane. It catalyses the reaction a quinone + NADH + 5 H(+)(in) = a quinol + NAD(+) + 4 H(+)(out). Functionally, NDH-1 shuttles electrons from NADH, via FMN and iron-sulfur (Fe-S) centers, to quinones in the respiratory chain. The immediate electron acceptor for the enzyme in this species is believed to be ubiquinone. Couples the redox reaction to proton translocation (for every two electrons transferred, four hydrogen ions are translocated across the cytoplasmic membrane), and thus conserves the redox energy in a proton gradient. The protein is NADH-quinone oxidoreductase subunit B of Nitratiruptor sp. (strain SB155-2).